The chain runs to 151 residues: Neuroglobin (151 aa).

A Globin domain is found at 1–149 (MERPESELIR…VVQAMSRGWD (149 aa)). 2 residues coordinate heme b: His-64 and His-96.

Belongs to the globin family. As to quaternary structure, monomer. Homodimer and homotetramer; disulfide-linked. Mainly monomeric but also detected as part of homodimers and homotetramers. Interacts with 14-3-3 proteins; regulates the phosphorylation of NGB. Could interact (ferrous form) with G-alpha(i) proteins (GTP-bound form). Post-translationally, phosphorylated during hypoxia by ERK1/ERK2. Phosphorylation regulates the heme pocket hexacoordination preventing the association of His-64 with the heme metal center. Thereby, promotes the access of dioxygen and nitrite to the heme and stimulates the nitrite reductase activity. Phosphorylation during hypoxia is stabilized by 14-3-3 proteins. Widely distributed throughout the adult brain, including cerebral cortex, hippocampus, thalamus, hypothalamus, olfactory bulb, and cerebellum.

It localises to the cytoplasm. The protein localises to the cytosol. Its subcellular location is the mitochondrion matrix. The enzyme catalyses Fe(III)-heme b-[protein] + nitric oxide + H2O = Fe(II)-heme b-[protein] + nitrite + 2 H(+). Functionally, monomeric globin with a bis-histidyl six-coordinate heme-iron atom through which it can bind dioxygen, carbon monoxide and nitric oxide. Could help transport oxygen and increase its availability to the metabolically active neuronal tissues, though its low quantity in tissues as well as its high affinity for dioxygen, which may limit its oxygen-releasing ability, argue against it. The ferrous/deoxygenated form exhibits a nitrite reductase activity and it could produce nitric oxide which in turn inhibits cellular respiration in response to hypoxia. In its ferrous/deoxygenated state, it may also exhibit GDI (Guanine nucleotide Dissociation Inhibitor) activity toward heterotrimeric G-alpha proteins, thereby regulating signal transduction to facilitate neuroprotective responses in the wake of hypoxia and associated oxidative stress. In Rattus norvegicus (Rat), this protein is Neuroglobin.